Here is a 549-residue protein sequence, read N- to C-terminus: Glucose-6-phosphate isomerase (549 aa).

Glu354 (proton donor) is an active-site residue. Residues His385 and Lys513 contribute to the active site.

Belongs to the GPI family.

It localises to the cytoplasm. It catalyses the reaction alpha-D-glucose 6-phosphate = beta-D-fructose 6-phosphate. Its pathway is carbohydrate biosynthesis; gluconeogenesis. It functions in the pathway carbohydrate degradation; glycolysis; D-glyceraldehyde 3-phosphate and glycerone phosphate from D-glucose: step 2/4. In terms of biological role, catalyzes the reversible isomerization of glucose-6-phosphate to fructose-6-phosphate. The polypeptide is Glucose-6-phosphate isomerase (Nitrosococcus oceani (strain ATCC 19707 / BCRC 17464 / JCM 30415 / NCIMB 11848 / C-107)).